Here is a 216-residue protein sequence, read N- to C-terminus: Cyclin-U4-2 (216 aa).

This sequence belongs to the cyclin family. Cyclin U/P subfamily. As to quaternary structure, interacts with CDKA-1. In terms of tissue distribution, expressed in roots, stems and flowers. Expressed in the shoot apex, leaf primordia and young leaves.

This chain is Cyclin-U4-2 (CYCU4-2), found in Arabidopsis thaliana (Mouse-ear cress).